The sequence spans 333 residues: MVERLLESSASWSNFFIFFGLAVLLLFAVLGFVTYGILAERKVMGFMQGRVGPNQVGGRFGLLQTVADVLKLLLKEDSIPKAADKPLFILAPIIAFAPAFMVLAVIPFTSQFQFADIGVGLLYYIAISGITTIGVLTGGWASNNKYSLLGGMRAAAQMISYEIPLVMSVIGIVLLTGSLNLNEIVASQEKVWYIFAQPIGFIIFLIAAVAELNRTPFDLPEAESELVSGYHTEYSGFRWAFFMLAEYVYLFGMASLMTVLFLGGWNPVLFLDFIPGAVWFALKFSAVVFLFIWFRVTFPRMRGDQLMEFGWKVLLPIALANIFLTALIKELFF.

Transmembrane regions (helical) follow at residues 15-35 (FFIF…FVTY), 88-108 (FILA…VIPF), 117-137 (IGVG…GVLT), 159-179 (ISYE…TGSL), 191-211 (VWYI…AVAE), 241-261 (FFML…TVLF), 273-293 (FIPG…LFIW), and 313-333 (VLLP…ELFF).

The protein belongs to the complex I subunit 1 family. In terms of assembly, NDH-1 is composed of 14 different subunits. Subunits NuoA, H, J, K, L, M, N constitute the membrane sector of the complex.

Its subcellular location is the cell membrane. It catalyses the reaction a quinone + NADH + 5 H(+)(in) = a quinol + NAD(+) + 4 H(+)(out). Its function is as follows. NDH-1 shuttles electrons from NADH, via FMN and iron-sulfur (Fe-S) centers, to quinones in the respiratory chain. The immediate electron acceptor for the enzyme in this species is believed to be ubiquinone. Couples the redox reaction to proton translocation (for every two electrons transferred, four hydrogen ions are translocated across the cytoplasmic membrane), and thus conserves the redox energy in a proton gradient. This subunit may bind ubiquinone. The protein is NADH-quinone oxidoreductase subunit H of Bacillus cytotoxicus (strain DSM 22905 / CIP 110041 / 391-98 / NVH 391-98).